The chain runs to 555 residues: Cytochrome P450 78A11 (555 aa).

A helical transmembrane segment spans residues 12-32; sequence VDATWWAYALPALLGADTLCA. Cys495 provides a ligand contact to heme.

Belongs to the cytochrome P450 family. The cofactor is heme. As to expression, expressed in seedlings, shoot apices and young panicles, but not in mature leaves, calli and roots.

Its subcellular location is the membrane. In terms of biological role, involved in the regular timing (plastochron) of lateral organs formation. May regulate the rate of leaf initiation and the duration of vegetative phase. Seems to be redundant to the function of PLASTOCHRON2, but to act in an independent pathway. This Oryza sativa subsp. japonica (Rice) protein is Cytochrome P450 78A11 (CYP78A11).